Here is a 295-residue protein sequence, read N- to C-terminus: Ribosomal RNA small subunit methyltransferase A (295 aa).

S-adenosyl-L-methionine is bound by residues asparagine 31, leucine 33, glycine 58, glutamate 79, aspartate 104, and asparagine 129.

The protein belongs to the class I-like SAM-binding methyltransferase superfamily. rRNA adenine N(6)-methyltransferase family. RsmA subfamily.

Its subcellular location is the cytoplasm. The enzyme catalyses adenosine(1518)/adenosine(1519) in 16S rRNA + 4 S-adenosyl-L-methionine = N(6)-dimethyladenosine(1518)/N(6)-dimethyladenosine(1519) in 16S rRNA + 4 S-adenosyl-L-homocysteine + 4 H(+). Functionally, specifically dimethylates two adjacent adenosines (A1518 and A1519) in the loop of a conserved hairpin near the 3'-end of 16S rRNA in the 30S particle. May play a critical role in biogenesis of 30S subunits. The sequence is that of Ribosomal RNA small subunit methyltransferase A from Leuconostoc citreum (strain KM20).